The primary structure comprises 189 residues: Heme-binding protein 1 (189 aa).

It belongs to the HEBP family. As to quaternary structure, monomer.

Its subcellular location is the cytoplasm. Functionally, may bind free porphyrinogens that may be present in the cell and thus facilitate removal of these potentially toxic compound. Binds with a high affinity to one molecule of heme or porphyrins. It binds metalloporphyrins, free porphyrins and N-methylprotoporphyrin with similar affinities. The protein is Heme-binding protein 1 (HEBP1) of Sus scrofa (Pig).